The following is an 818-amino-acid chain: Phenylalanine--tRNA ligase beta subunit (818 aa).

The tRNA-binding domain maps to 39–148; the sequence is AAELQKFEVA…EDAVVGENFT (110 aa). Residues 423 to 498 enclose the B5 domain; it reads SQKKPLDFSA…RIYGYDKIES (76 aa). Residues Asp-476, Asp-482, Glu-485, and Glu-486 each coordinate Mg(2+). Residues 724 to 817 form the FDX-ACB domain; the sequence is SDFQANFRDY…ISQKFQGTLR (94 aa).

Belongs to the phenylalanyl-tRNA synthetase beta subunit family. Type 1 subfamily. As to quaternary structure, tetramer of two alpha and two beta subunits. Requires Mg(2+) as cofactor.

It localises to the cytoplasm. It carries out the reaction tRNA(Phe) + L-phenylalanine + ATP = L-phenylalanyl-tRNA(Phe) + AMP + diphosphate + H(+). The protein is Phenylalanine--tRNA ligase beta subunit of Rickettsia conorii (strain ATCC VR-613 / Malish 7).